The following is a 103-amino-acid chain: Matrix Gla protein (103 aa).

Positions 1 to 19 (MRSLLLLTVLAALVVAILC) are cleaved as a signal peptide. The residue at position 21 (Glu-21) is a 4-carboxyglutamate. Ser-22, Ser-25, and Ser-28 each carry phosphoserine. The Gla domain maps to 51-97 (MAKAQERVREQRKPAYELNREACDDYKLCERYAMVYGYNAAYNRYFR). 4-carboxyglutamate occurs at positions 56, 60, 67, and 71. A disulfide bridge connects residues Cys-73 and Cys-79.

The protein belongs to the osteocalcin/matrix Gla protein family. In terms of processing, requires vitamin K-dependent gamma-carboxylation for its function.

Its subcellular location is the secreted. Functionally, associates with the organic matrix of bone and cartilage. Thought to act as an inhibitor of bone formation. In Oryctolagus cuniculus (Rabbit), this protein is Matrix Gla protein (MGP).